A 282-amino-acid chain; its full sequence is 4-hydroxy-3-methylbut-2-enyl diphosphate reductase (282 aa).

Cys-12 is a binding site for [4Fe-4S] cluster. (2E)-4-hydroxy-3-methylbut-2-enyl diphosphate contacts are provided by His-40 and His-72. Positions 40 and 72 each coordinate dimethylallyl diphosphate. Residues His-40 and His-72 each coordinate isopentenyl diphosphate. Cys-94 contributes to the [4Fe-4S] cluster binding site. His-122 contributes to the (2E)-4-hydroxy-3-methylbut-2-enyl diphosphate binding site. Position 122 (His-122) interacts with dimethylallyl diphosphate. His-122 contributes to the isopentenyl diphosphate binding site. The Proton donor role is filled by Glu-124. Thr-160 provides a ligand contact to (2E)-4-hydroxy-3-methylbut-2-enyl diphosphate. Cys-188 contributes to the [4Fe-4S] cluster binding site. (2E)-4-hydroxy-3-methylbut-2-enyl diphosphate contacts are provided by Ser-216, Asn-218, and Ser-260. Residues Ser-216, Asn-218, and Ser-260 each contribute to the dimethylallyl diphosphate site. Isopentenyl diphosphate is bound by residues Ser-216, Asn-218, and Ser-260.

Belongs to the IspH family. Requires [4Fe-4S] cluster as cofactor.

It catalyses the reaction isopentenyl diphosphate + 2 oxidized [2Fe-2S]-[ferredoxin] + H2O = (2E)-4-hydroxy-3-methylbut-2-enyl diphosphate + 2 reduced [2Fe-2S]-[ferredoxin] + 2 H(+). The catalysed reaction is dimethylallyl diphosphate + 2 oxidized [2Fe-2S]-[ferredoxin] + H2O = (2E)-4-hydroxy-3-methylbut-2-enyl diphosphate + 2 reduced [2Fe-2S]-[ferredoxin] + 2 H(+). The protein operates within isoprenoid biosynthesis; dimethylallyl diphosphate biosynthesis; dimethylallyl diphosphate from (2E)-4-hydroxy-3-methylbutenyl diphosphate: step 1/1. It functions in the pathway isoprenoid biosynthesis; isopentenyl diphosphate biosynthesis via DXP pathway; isopentenyl diphosphate from 1-deoxy-D-xylulose 5-phosphate: step 6/6. Its function is as follows. Catalyzes the conversion of 1-hydroxy-2-methyl-2-(E)-butenyl 4-diphosphate (HMBPP) into a mixture of isopentenyl diphosphate (IPP) and dimethylallyl diphosphate (DMAPP). Acts in the terminal step of the DOXP/MEP pathway for isoprenoid precursor biosynthesis. In Geotalea daltonii (strain DSM 22248 / JCM 15807 / FRC-32) (Geobacter daltonii), this protein is 4-hydroxy-3-methylbut-2-enyl diphosphate reductase.